We begin with the raw amino-acid sequence, 56 residues long: Ovomucoid (56 aa).

The Kazal-like domain maps to Val6 to Cys56. 3 cysteine pairs are disulfide-bonded: Cys8-Cys38, Cys16-Cys35, and Cys24-Cys56. Asn45 carries an N-linked (GlcNAc...) asparagine glycan.

Its subcellular location is the secreted. The chain is Ovomucoid from Cyrtonyx montezumae (Montezuma quail).